The sequence spans 358 residues: Alpha-ketoglutarate-dependent L-arginine hydroxylase (358 aa).

Positions 1 to 21 (MTESPTTHHGAAPPDSVATPV) are disordered. A helical transmembrane segment spans residues 117–135 (LSFLLMLYAGLLGDVFGWA). 156–158 (LVS) is a binding site for L-arginine. Positions 168 and 170 each coordinate Fe cation. Threonine 194 is a binding site for 2-oxoglutarate. 268–270 (DGD) is an L-arginine binding site. Residue histidine 316 coordinates Fe cation. Positions 330 and 334 each coordinate 2-oxoglutarate. Residue arginine 334 coordinates L-arginine.

The protein belongs to the clavaminate synthase family. Requires Fe cation as cofactor.

It localises to the membrane. It carries out the reaction L-arginine + 2-oxoglutarate + O2 = (2S,3S)-hydroxyarginine + succinate + CO2. It functions in the pathway antibiotic biosynthesis. In terms of biological role, involved in the biosynthesis of capreomycidine, an unusual amino acid used by non-ribosomal peptide synthases (NRPS) to make the tuberactinomycin class of peptide antibiotics such as viomycin and capreomycin. Catalyzes the stereospecific hydroxylation of the C3 of (2S)-arginine to generate (3S)-hydroxy-(2S)-arginine. Usually clavaminic acid synthase-like oxygenases catalyze the formation of threo diastereomers, however VioC produces the erythro diastereomer of beta-carbon-hydroxylated L-arginine. It exerts a broad substrate specificity by accepting the analogs L-homoarginine and L-canavanine for the beta-carbon hydroxylation. The sequence is that of Alpha-ketoglutarate-dependent L-arginine hydroxylase (vioC) from Streptomyces vinaceus.